A 505-amino-acid chain; its full sequence is tRNA-2-methylthio-N(6)-dimethylallyladenosine synthase (505 aa).

Residues 14 to 132 (RTYEVRTYGC…LPVLLERARV (119 aa)) enclose the MTTase N-terminal domain. [4Fe-4S] cluster is bound by residues Cys23, Cys61, Cys95, Cys169, Cys173, and Cys176. Positions 155 to 386 (RESAYAAWVS…ALQEEISWEE (232 aa)) constitute a Radical SAM core domain. One can recognise a TRAM domain in the interval 388 to 456 (KKQVGRTLEL…PHHLLAEGPV (69 aa)).

It belongs to the methylthiotransferase family. MiaB subfamily. As to quaternary structure, monomer. It depends on [4Fe-4S] cluster as a cofactor.

It is found in the cytoplasm. It carries out the reaction N(6)-dimethylallyladenosine(37) in tRNA + (sulfur carrier)-SH + AH2 + 2 S-adenosyl-L-methionine = 2-methylsulfanyl-N(6)-dimethylallyladenosine(37) in tRNA + (sulfur carrier)-H + 5'-deoxyadenosine + L-methionine + A + S-adenosyl-L-homocysteine + 2 H(+). Its function is as follows. Catalyzes the methylthiolation of N6-(dimethylallyl)adenosine (i(6)A), leading to the formation of 2-methylthio-N6-(dimethylallyl)adenosine (ms(2)i(6)A) at position 37 in tRNAs that read codons beginning with uridine. The polypeptide is tRNA-2-methylthio-N(6)-dimethylallyladenosine synthase (Streptomyces viridosporus (strain ATCC 14672 / DSM 40746 / JCM 4963 / KCTC 9882 / NRRL B-12104 / FH 1290) (Streptomyces ghanaensis)).